Reading from the N-terminus, the 160-residue chain is 3-hydroxyacyl-[acyl-carrier-protein] dehydratase FabZ (160 aa).

Residue His59 is part of the active site.

This sequence belongs to the thioester dehydratase family. FabZ subfamily.

The protein resides in the cytoplasm. It carries out the reaction a (3R)-hydroxyacyl-[ACP] = a (2E)-enoyl-[ACP] + H2O. In terms of biological role, involved in unsaturated fatty acids biosynthesis. Catalyzes the dehydration of short chain beta-hydroxyacyl-ACPs and long chain saturated and unsaturated beta-hydroxyacyl-ACPs. This is 3-hydroxyacyl-[acyl-carrier-protein] dehydratase FabZ from Burkholderia thailandensis (strain ATCC 700388 / DSM 13276 / CCUG 48851 / CIP 106301 / E264).